A 112-amino-acid chain; its full sequence is Putative pterin-4-alpha-carbinolamine dehydratase (112 aa).

It belongs to the pterin-4-alpha-carbinolamine dehydratase family.

The enzyme catalyses (4aS,6R)-4a-hydroxy-L-erythro-5,6,7,8-tetrahydrobiopterin = (6R)-L-erythro-6,7-dihydrobiopterin + H2O. The chain is Putative pterin-4-alpha-carbinolamine dehydratase from Shewanella sp. (strain ANA-3).